The chain runs to 368 residues: Probable magnesium transporter (368 aa).

Residues 1–4 (MEDK) lie on the Extracellular side of the membrane. Residues 5 to 25 (YIGLALAMSSSLAIGTSFIIT) traverse the membrane as a helical segment. Over 26–50 (KKGLMDASARTGGTDGVQASDYLQN) the chain is Cytoplasmic. A helical transmembrane segment spans residues 51–71 (PIWWGGMITMAIGEIANFAAY). The Extracellular segment spans residues 72–76 (TFAPA). A helical membrane pass occupies residues 77-97 (ILVTPLGALSVIIGAVLAAIF). Topologically, residues 98–101 (LKER) are cytoplasmic. Residues 102–122 (LGTLGKMGCAICLMGSVIIIL) form a helical membrane-spanning segment. Residues 123-143 (HAPPDKEVQTVDEILGYATQP) lie on the Extracellular side of the membrane. The chain crosses the membrane as a helical span at residues 144-164 (GFMFYCTVVTLYSLFMIYKIV). Topologically, residues 165-175 (PKYGNTNPMIY) are cytoplasmic. Residues 176-196 (LSICSSVGSISVMSIKAFGIA) form a helical membrane-spanning segment. Topologically, residues 197–206 (LKLTLGGNNQ) are extracellular. The helical transmembrane segment at 207–227 (FTHVSTYLFLIVVALCIVTQM) threads the bilayer. At 228 to 240 (NYFNKALDQFDTS) the chain is on the cytoplasmic side. Residues 241–261 (IVNPLYYVTFTTFTLAASFIL) traverse the membrane as a helical segment. Over 262–269 (FKGFNTSS) the chain is Extracellular. Asparagine 266 carries N-linked (GlcNAc...) asparagine glycosylation. The chain crosses the membrane as a helical span at residues 270–290 (AVDIISLLIGFLIIFSGVYLL). Over 291 to 368 (NISRSESPMV…GDEDTRNYRH (78 aa)) the chain is Cytoplasmic.

It belongs to the NIPA family.

It localises to the cell membrane. The protein resides in the early endosome. The enzyme catalyses Mg(2+)(in) = Mg(2+)(out). In terms of biological role, probably acts as a selective Mg(2+) transporter. Plays a role in cell wall integrity and in engulfment by host macrophages. This is Probable magnesium transporter from Candida albicans (strain SC5314 / ATCC MYA-2876) (Yeast).